A 482-amino-acid polypeptide reads, in one-letter code: Aspartyl/glutamyl-tRNA(Asn/Gln) amidotransferase subunit B (482 aa).

It belongs to the GatB/GatE family. GatB subfamily. In terms of assembly, heterotrimer of A, B and C subunits.

The enzyme catalyses L-glutamyl-tRNA(Gln) + L-glutamine + ATP + H2O = L-glutaminyl-tRNA(Gln) + L-glutamate + ADP + phosphate + H(+). The catalysed reaction is L-aspartyl-tRNA(Asn) + L-glutamine + ATP + H2O = L-asparaginyl-tRNA(Asn) + L-glutamate + ADP + phosphate + 2 H(+). Its function is as follows. Allows the formation of correctly charged Asn-tRNA(Asn) or Gln-tRNA(Gln) through the transamidation of misacylated Asp-tRNA(Asn) or Glu-tRNA(Gln) in organisms which lack either or both of asparaginyl-tRNA or glutaminyl-tRNA synthetases. The reaction takes place in the presence of glutamine and ATP through an activated phospho-Asp-tRNA(Asn) or phospho-Glu-tRNA(Gln). The sequence is that of Aspartyl/glutamyl-tRNA(Asn/Gln) amidotransferase subunit B from Thermotoga sp. (strain RQ2).